Reading from the N-terminus, the 331-residue chain is MSLSSKLLVYAYYGSYNLPHDRYGESYHLYRIVHEHLTNTYVSNASCVRRDIATARCLNSGHLCFDVARQLLDVSEVAARLSAWFRCGDATGLCADMQRALADIDRHAPLARRVGRRANIFALDAIADIPSDVTNNLQGIIGRFMHFPRCSGLARVADVFDPDIRADGWWYHKFCVLTYMHLVACGAVPAGSATRLRDAVAKHIGPNDEGNCAPAIAAVYGRFCAIGREHFAHHKTACMHILFQFMRNDLTPADERHPCFGVIKDFGRQCKDTYTDLRTHADALYIHGTTDRQKNALFDLLCCVNASDIDADCYDCVVNKFYATQNKKYKM.

This is an uncharacterized protein from Orgyia pseudotsugata (Douglas-fir tussock moth).